The primary structure comprises 311 residues: D-alanine--D-alanine ligase (311 aa).

Residues 105-306 (KQLYIHAGLP…FSALLDRLIE (202 aa)) form the ATP-grasp domain. 133–188 (ADRLGLPVVVKPEHEGSSIGLSIVRNRDQLAAAVETGWQYDRRCLIEKYVHGIEIT) lines the ATP pocket. Residues D261, E273, and N275 each contribute to the Mg(2+) site.

It belongs to the D-alanine--D-alanine ligase family. The cofactor is Mg(2+). Mn(2+) serves as cofactor.

The protein resides in the cytoplasm. It catalyses the reaction 2 D-alanine + ATP = D-alanyl-D-alanine + ADP + phosphate + H(+). It participates in cell wall biogenesis; peptidoglycan biosynthesis. Cell wall formation. The chain is D-alanine--D-alanine ligase from Syntrophobacter fumaroxidans (strain DSM 10017 / MPOB).